Consider the following 113-residue polypeptide: uncharacterized protein (113 aa).

2 disordered regions span residues 1-22 and 90-113; these read MGEH…PLAQ and DGRH…SDDL. Residues 90-99 show a composition bias toward basic and acidic residues; that stretch reads DGRHTTESSF. Residues 100-113 show a composition bias toward low complexity; the sequence is EHSSPSRSPQSDDL.

This is an uncharacterized protein from Mycobacterium tuberculosis (strain ATCC 25618 / H37Rv).